Reading from the N-terminus, the 194-residue chain is Histone H1.0 (194 aa).

M1 is modified (N-acetylmethionine). Residues 1–11 (MTENSTSAPAA) are compositionally biased toward low complexity. The disordered stretch occupies residues 1 to 29 (MTENSTSAPAAKPKRAKASKKSTDHPKYS). An N-acetylthreonine; partial; in Histone H1.0, N-terminally processed modification is found at T2. N4 is subject to Deamidated asparagine; partial. One can recognise an H15 domain in the interval 24–97 (DHPKYSDMIV…GASGSFRLAK (74 aa)). Citrulline is present on R42. The segment at 84–194 (TKGVGASGSF…SSAKRAGKKK (111 aa)) is disordered. ADP-ribosylserine is present on S104. Basic residues predominate over residues 105-194 (VAFKKTKKEI…SSAKRAGKKK (90 aa)).

Belongs to the histone H1/H5 family. In terms of processing, phosphorylated on Ser-17 in RNA edited version. ADP-ribosylated on Ser-104 in response to DNA damage.

Its subcellular location is the nucleus. It localises to the chromosome. Functionally, histones H1 are necessary for the condensation of nucleosome chains into higher-order structures. The histones H1.0 are found in cells that are in terminal stages of differentiation or that have low rates of cell division. This is Histone H1.0 from Homo sapiens (Human).